We begin with the raw amino-acid sequence, 337 residues long: Ferredoxin--NADP reductase (337 aa).

Asp35, Gln43, Tyr48, Val88, Phe123, Asp289, and Thr330 together coordinate FAD.

Belongs to the ferredoxin--NADP reductase type 2 family. In terms of assembly, homodimer. It depends on FAD as a cofactor.

The catalysed reaction is 2 reduced [2Fe-2S]-[ferredoxin] + NADP(+) + H(+) = 2 oxidized [2Fe-2S]-[ferredoxin] + NADPH. The chain is Ferredoxin--NADP reductase from Paramagnetospirillum magneticum (strain ATCC 700264 / AMB-1) (Magnetospirillum magneticum).